We begin with the raw amino-acid sequence, 462 residues long: Lipase A (462 aa).

The N-terminal stretch at 1–21 (MRVSLRSITSLLAAATAAVLA) is a signal peptide. Cysteine 122 and cysteine 294 form a disulfide bridge. Active-site charge relay system residues include serine 205, aspartate 355, and histidine 387. The cysteines at positions 371 and 415 are disulfide-linked.

This sequence belongs to the AB hydrolase superfamily. Lipase family. Monomer.

It localises to the secreted. The catalysed reaction is a triacylglycerol + H2O = a diacylglycerol + a fatty acid + H(+). Its function is as follows. Hydrolyzes triglycerides, with a preference for substrates with short-chain lengths (C4 to C8). Has the highest activity with tributyrin (C4), followed by tricaproin (C6) and tricaprylin (C8). Can also hydrolyze vinylacetate (C2) and triolein (C18), but with lower efficiency. Has no activity with tripalmitin (C16). The chain is Lipase A from Moesziomyces aphidis (Pseudozyma aphidis).